The chain runs to 695 residues: Biosynthetic arginine decarboxylase 1 (695 aa).

Position 141 is an N6-(pyridoxal phosphate)lysine (Lys-141). Residue Leu-332 to Tyr-342 coordinates substrate.

It belongs to the Orn/Lys/Arg decarboxylase class-II family. SpeA subfamily. It depends on Mg(2+) as a cofactor. Pyridoxal 5'-phosphate is required as a cofactor.

The catalysed reaction is L-arginine + H(+) = agmatine + CO2. Functionally, catalyzes the biosynthesis of agmatine from arginine. This chain is Biosynthetic arginine decarboxylase 1 (speA1), found in Synechocystis sp. (strain ATCC 27184 / PCC 6803 / Kazusa).